The following is a 606-amino-acid chain: Kelch-like protein 26 (606 aa).

A compositionally biased stretch (low complexity) spans 1–19; sequence MAESGGSSGSSQSPERPSS. A disordered region spans residues 1–20; that stretch reads MAESGGSSGSSQSPERPSSL. A2 is modified (N-acetylalanine). The BTB domain occupies 54–121; the sequence is LDVVLTVNSE…AYSAEVTLDL (68 aa). The BACK domain maps to 156–257; that stretch reads CLHIGQMATT…QPAELVDSVQ (102 aa). 6 Kelch repeats span residues 301–352, 353–404, 406–451, 452–499, 501–550, and 552–599; these read SLVA…VLDN, FVYV…ALGG, LYAT…AAAG, RLYI…GAAG, IYAL…LLER, and IYIV…AVLL. S430 bears the Phosphoserine mark.

In terms of biological role, may play a role in endo(sarco)plasmic reticulum (ER/SR) mitochondrial signaling. May be part of the ubiquitin-proteasome system (UPS) and affect ubiquitination and degradation of target substrates in cardiomyocytes. This Mus musculus (Mouse) protein is Kelch-like protein 26 (Klhl26).